The sequence spans 396 residues: MNYCKTTFHIFFFVLFFITIYEIKCQLRFASLGDWGKDTKGQILNAKYFKQFIKNERVTFIVSPGSNFIDGVKGLNDPAWKNLYEDVYSEEKGDMYMPFFTVLGTRDWTGNYNAQLLKGQGIYIEKNGETSIEKDADATNYPKWIMPNYWYHYFTHFTVSSGPSIVKTGHKDLAAAFIFIDTWVLSSNFPYKKIHEKAWNDLKSQLSVAKKIADFIIVVGDQPIYSSGYSRGSSYLAYYLLPLLKDAEVDLYISGHDNNMEVIEDNDMAHITCGSGSMSQGKSGMKNSKSLFFSSDIGFCVHELSNNGIVTKFVSSKKGEVIYTHKLNIKKKKTLDKVNALQHFAALPNVELTDVPSSGPMGNKDTFVRVVGTIGILIGSVIVFIGASSFLSKNMK.

At 1–369 (MNYCKTTFHI…PMGNKDTFVR (369 aa)) the chain is on the lumenal side. 2 residues coordinate a metal cation: histidine 195 and histidine 256. A helical membrane pass occupies residues 370-390 (VVGTIGILIGSVIVFIGASSF). Residues 391 to 396 (LSKNMK) lie on the Cytoplasmic side of the membrane.

The protein belongs to the metallophosphoesterase superfamily. Purple acid phosphatase family. In terms of assembly, component of the glideosome complex composed of GAP50, GAP45, MTIP and MyoA; the complex is formed during the late schizont stage and in merozoites. MyoA, MTIP and GAP45 probably form an initial complex in the cytoplasm which is then recruited to the outer face of the inner membrane complex via the interaction with GAP50. Interacts with GAP45; the interaction is independent of GAP45 phosphorylation status and can also occur independently of the formation of the glideosome complex. Interacts with human factor H isoform CFH (via sushi 6-7 domains) and isoform FHL-1 (via sushi 6-7 domains); the interaction occurs in the vector mosquito midgut at the surface of activated gametocytes; the interaction protects the parasite from alternative complement pathway-mediated elimination. The cofactor is a metal cation. In terms of processing, the N-terminus signal is likely to be cleaved.

The protein localises to the inner membrane complex. The protein resides in the cell membrane. Its subcellular location is the endoplasmic reticulum membrane. The enzyme catalyses a phosphate monoester + H2O = an alcohol + phosphate. Activity is independent of metal ions. Functionally, component of the glideosome complex, an inner membrane complex structure involved in parasite gliding motility and host cell invasion. During the asexual blood stage, may play a role in the assembly and anchoring of the glideosome complex to the inner membrane complex. During the sexual stage in the vector mosquito midgut, protects gametocytes against host alternative complement pathway-mediated elimination by interacting with host complement inhibitor factor H. Has phosphatase activity towards nucleotides such as ATP, vitamins B1 and B6, phosphorylated sugars, glycerol phosphates and inositol triphosphates. However, the phosphatase activity is controversial. This is Glideosome-associated protein 50 from Plasmodium falciparum (isolate 3D7).